A 55-amino-acid chain; its full sequence is Locustin (55 aa).

Intrachain disulfides connect C5/C40, C7/C36, C10/C32, and C17/C54.

Monomer. As to expression, stored in hemocyte granules and secreted into the hemolymph.

It localises to the secreted. Has antibacterial activity against Gram-positive bacterium M.luteus. The sequence is that of Locustin from Locusta migratoria (Migratory locust).